Here is a 103-residue protein sequence, read N- to C-terminus: Small ribosomal subunit protein uS14c (103 aa).

The disordered stretch occupies residues serine 27 to asparagine 56.

Belongs to the universal ribosomal protein uS14 family. As to quaternary structure, part of the 30S ribosomal subunit.

Its subcellular location is the plastid. It localises to the chloroplast. Its function is as follows. Binds 16S rRNA, required for the assembly of 30S particles. The chain is Small ribosomal subunit protein uS14c from Zea mays (Maize).